The chain runs to 247 residues: Adenosylcobinamide-GDP ribazoletransferase (247 aa).

The next 6 membrane-spanning stretches (helical) occupy residues 34–54 (IVMF…IFIL), 59–79 (CGIP…TGGF), 113–133 (GGLA…ELAL), 138–158 (MLAA…LLMY), 171–191 (VFIG…AVIV), and 194–214 (VLLP…AIFI).

Belongs to the CobS family. It depends on Mg(2+) as a cofactor.

It localises to the cell inner membrane. It carries out the reaction alpha-ribazole + adenosylcob(III)inamide-GDP = adenosylcob(III)alamin + GMP + H(+). The enzyme catalyses alpha-ribazole 5'-phosphate + adenosylcob(III)inamide-GDP = adenosylcob(III)alamin 5'-phosphate + GMP + H(+). It functions in the pathway cofactor biosynthesis; adenosylcobalamin biosynthesis; adenosylcobalamin from cob(II)yrinate a,c-diamide: step 7/7. Functionally, joins adenosylcobinamide-GDP and alpha-ribazole to generate adenosylcobalamin (Ado-cobalamin). Also synthesizes adenosylcobalamin 5'-phosphate from adenosylcobinamide-GDP and alpha-ribazole 5'-phosphate. The chain is Adenosylcobinamide-GDP ribazoletransferase from Salmonella paratyphi A (strain ATCC 9150 / SARB42).